The following is a 171-amino-acid chain: Actin-related protein 2/3 complex subunit 4 (171 aa).

It belongs to the ARPC4 family. Component of the Arp2/3 complex composed of ARP2, ARP3, ARC40/p41-ARC, ARC35/p34-ARC, ARC18/p21-ARC, ARC19/p20-ARC and ARC16/p16-ARC.

It localises to the cytoplasm. The protein resides in the cytoskeleton. Its subcellular location is the actin patch. In terms of biological role, functions as actin-binding component of the Arp2/3 complex which is involved in regulation of actin polymerization and together with an activating nucleation-promoting factor (NPF) mediates the formation of branched actin networks. Seems to contact the mother actin filament. The polypeptide is Actin-related protein 2/3 complex subunit 4 (ARC19) (Saccharomyces cerevisiae (strain ATCC 204508 / S288c) (Baker's yeast)).